The following is a 249-amino-acid chain: Small ribosomal subunit protein eS6 (249 aa).

Basic and acidic residues predominate over residues 216–229 (RMKEAKEKRQEQIA). Positions 216–249 (RMKEAKEKRQEQIAKRRRLSSLRASTSKSESSQK) are disordered. A phosphoserine mark is found at Ser-235, Ser-236, Ser-240, Ser-244, and Ser-247. Residues 236–249 (SLRASTSKSESSQK) show a composition bias toward low complexity.

This sequence belongs to the eukaryotic ribosomal protein eS6 family. As to quaternary structure, component of the small ribosomal subunit. Part of the small subunit (SSU) processome, composed of more than 70 proteins and the RNA chaperone small nucleolar RNA (snoRNA) U3. In terms of processing, ribosomal protein S6 is the major substrate of protein kinases in eukaryote ribosomes. The phosphorylation is stimulated by growth factors, tumor promoting agents, and mitogens. It is dephosphorylated at growth arrest.

Its subcellular location is the cytoplasm. The protein resides in the nucleus. The protein localises to the nucleolus. Component of the 40S small ribosomal subunit. Plays an important role in controlling cell growth and proliferation through the selective translation of particular classes of mRNA. Part of the small subunit (SSU) processome, first precursor of the small eukaryotic ribosomal subunit. During the assembly of the SSU processome in the nucleolus, many ribosome biogenesis factors, an RNA chaperone and ribosomal proteins associate with the nascent pre-rRNA and work in concert to generate RNA folding, modifications, rearrangements and cleavage as well as targeted degradation of pre-ribosomal RNA by the RNA exosome. This Gallus gallus (Chicken) protein is Small ribosomal subunit protein eS6 (RPS6).